The following is a 305-amino-acid chain: Protoheme IX farnesyltransferase (305 aa).

9 consecutive transmembrane segments (helical) span residues 28–48 (VVLLMLLTAIVGMCLASPGIV), 52–72 (VFLFGNLGIALAASSAAAINH), 102–122 (IFAAILCILSMIILIAFVNLL), 123–143 (TALLTFITLIGYAGFYTLYLK), 150–170 (IVIGGLAGAAPPLLGWVAVTG), 176–196 (ALILLLIIFLWTPPHFWALAI), 221–241 (INILLYTLLLTAISFLPFVIM), 243–263 (SGWIYFSSVCLLNLGFLYWAI), and 282–302 (IWYLMLLFTALLVDHYVYLAL).

The protein belongs to the UbiA prenyltransferase family. Protoheme IX farnesyltransferase subfamily.

The protein resides in the cell inner membrane. The enzyme catalyses heme b + (2E,6E)-farnesyl diphosphate + H2O = Fe(II)-heme o + diphosphate. The protein operates within porphyrin-containing compound metabolism; heme O biosynthesis; heme O from protoheme: step 1/1. Functionally, converts heme B (protoheme IX) to heme O by substitution of the vinyl group on carbon 2 of heme B porphyrin ring with a hydroxyethyl farnesyl side group. The protein is Protoheme IX farnesyltransferase of Coxiella burnetii (strain CbuK_Q154) (Coxiella burnetii (strain Q154)).